We begin with the raw amino-acid sequence, 72 residues long: Translation initiation factor IF-1 (72 aa).

Positions 1-72 (MAKEDNFELE…SKGRITYRAR (72 aa)) constitute an S1-like domain.

It belongs to the IF-1 family. As to quaternary structure, component of the 30S ribosomal translation pre-initiation complex which assembles on the 30S ribosome in the order IF-2 and IF-3, IF-1 and N-formylmethionyl-tRNA(fMet); mRNA recruitment can occur at any time during PIC assembly.

It localises to the cytoplasm. Functionally, one of the essential components for the initiation of protein synthesis. Stabilizes the binding of IF-2 and IF-3 on the 30S subunit to which N-formylmethionyl-tRNA(fMet) subsequently binds. Helps modulate mRNA selection, yielding the 30S pre-initiation complex (PIC). Upon addition of the 50S ribosomal subunit IF-1, IF-2 and IF-3 are released leaving the mature 70S translation initiation complex. The chain is Translation initiation factor IF-1 from Saccharophagus degradans (strain 2-40 / ATCC 43961 / DSM 17024).